We begin with the raw amino-acid sequence, 361 residues long: Biotin synthase (361 aa).

A disordered region spans residues 14 to 38 (AQRTPEPLPPTSQGLARPSHDVVRG). The region spanning 86 to 315 (HKGGPAALCG…ARDILVCGGR (230 aa)) is the Radical SAM core domain. 3 residues coordinate [4Fe-4S] cluster: C104, C108, and C111. The [2Fe-2S] cluster site is built by C180 and C240.

Belongs to the radical SAM superfamily. Biotin synthase family. Homodimer. Requires [4Fe-4S] cluster as cofactor. It depends on [2Fe-2S] cluster as a cofactor.

The enzyme catalyses (4R,5S)-dethiobiotin + (sulfur carrier)-SH + 2 reduced [2Fe-2S]-[ferredoxin] + 2 S-adenosyl-L-methionine = (sulfur carrier)-H + biotin + 2 5'-deoxyadenosine + 2 L-methionine + 2 oxidized [2Fe-2S]-[ferredoxin]. Its pathway is cofactor biosynthesis; biotin biosynthesis; biotin from 7,8-diaminononanoate: step 2/2. Catalyzes the conversion of dethiobiotin (DTB) to biotin by the insertion of a sulfur atom into dethiobiotin via a radical-based mechanism. The protein is Biotin synthase of Nitratidesulfovibrio vulgaris (strain DP4) (Desulfovibrio vulgaris).